Here is a 332-residue protein sequence, read N- to C-terminus: uncharacterized protein (332 aa).

Acidic residues-rich tracts occupy residues 290-314 (EDID…DSFG) and 323-332 (EDSEDSDNSE). The disordered stretch occupies residues 290 to 332 (EDIDDIDDSDESDDSDDSEDSDSFGDSDSSGNSEDSEDSDNSE).

It belongs to the mimivirus L17x/L18x family.

This is an uncharacterized protein from Acanthamoeba polyphaga mimivirus (APMV).